The primary structure comprises 327 residues: Aspartate--ammonia ligase (327 aa).

The protein belongs to the class-II aminoacyl-tRNA synthetase family. AsnA subfamily.

It is found in the cytoplasm. It carries out the reaction L-aspartate + NH4(+) + ATP = L-asparagine + AMP + diphosphate + H(+). It functions in the pathway amino-acid biosynthesis; L-asparagine biosynthesis; L-asparagine from L-aspartate (ammonia route): step 1/1. This Bacillus cytotoxicus (strain DSM 22905 / CIP 110041 / 391-98 / NVH 391-98) protein is Aspartate--ammonia ligase.